Reading from the N-terminus, the 164-residue chain is SsrA-binding protein (164 aa).

Residues 141-164 (KLHDKRQDEKQKSIKREINSALKR) are disordered. Over residues 145–158 (KRQDEKQKSIKREI) the composition is skewed to basic and acidic residues.

This sequence belongs to the SmpB family.

Its subcellular location is the cytoplasm. Its function is as follows. Required for rescue of stalled ribosomes mediated by trans-translation. Binds to transfer-messenger RNA (tmRNA), required for stable association of tmRNA with ribosomes. tmRNA and SmpB together mimic tRNA shape, replacing the anticodon stem-loop with SmpB. tmRNA is encoded by the ssrA gene; the 2 termini fold to resemble tRNA(Ala) and it encodes a 'tag peptide', a short internal open reading frame. During trans-translation Ala-aminoacylated tmRNA acts like a tRNA, entering the A-site of stalled ribosomes, displacing the stalled mRNA. The ribosome then switches to translate the ORF on the tmRNA; the nascent peptide is terminated with the 'tag peptide' encoded by the tmRNA and targeted for degradation. The ribosome is freed to recommence translation, which seems to be the essential function of trans-translation. In Prochlorococcus marinus (strain MIT 9215), this protein is SsrA-binding protein.